A 465-amino-acid chain; its full sequence is Probable inactive receptor-like kinase BSK12 (465 aa).

Over residues 1–12 (MGCCYSLSSTVD) the composition is skewed to polar residues. The interval 1–34 (MGCCYSLSSTVDPVQDHTTDASSEPRNGGGEDPP) is disordered. Gly-2 carries N-myristoyl glycine lipidation. 2 S-palmitoyl cysteine lipidation sites follow: Cys-3 and Cys-4. The region spanning 50–291 (FSPENIVSDQ…KEIVATLETL (242 aa)) is the Protein kinase domain. ATP contacts are provided by residues 56 to 64 (VSDQTSDVV) and Lys-78.

Belongs to the protein kinase superfamily. Ser/Thr protein kinase family. In terms of assembly, interacts with YDA. Post-translationally, diacylation-mediated membrane association is essential for BSK12 function. As to expression, expressed at the mRNA level in the sperm cells in mature pollen, but the protein is only detectable in the zygote and the micropylar endosperm upon fertilization.

It is found in the cell membrane. In terms of biological role, probable inactive protein kinase that activates the YODA MAP kinase cascade, which regulates the asymmetric first division and embryo polarity, by promoting the elongation of the zygote and the development of its basal daughter cell into the extra-embryonic suspensor. Acts as an adapter at the plasma membrane, possibly by recruiting and binding an activator. This Arabidopsis thaliana (Mouse-ear cress) protein is Probable inactive receptor-like kinase BSK12.